We begin with the raw amino-acid sequence, 473 residues long: Photosystem II CP43 reaction center protein (473 aa).

Positions 1–14 are excised as a propeptide; that stretch reads MKTLYSLRRFYPVE. Thr-15 bears the N-acetylthreonine mark. Thr-15 carries the post-translational modification Phosphothreonine. Transmembrane regions (helical) follow at residues 69-93, 134-155, 178-200, 255-275, and 291-312; these read LFEV…PHLA, LLGP…KDRN, KALY…RKIT, KPFA…LSYS, and WFNN…ASQA. Residue Glu-367 participates in [CaMn4O5] cluster binding. A propeptide spanning residues 426-473 is cleaved from the precursor; the sequence is LSTSHFVLGFFLFVGHLWHAGRARAAAAGFEKGIDRDFEPVLSMTPLN. Residues 447 to 471 traverse the membrane as a helical segment; the sequence is RARAAAAGFEKGIDRDFEPVLSMTP.

The protein belongs to the PsbB/PsbC family. PsbC subfamily. In terms of assembly, PSII is composed of 1 copy each of membrane proteins PsbA, PsbB, PsbC, PsbD, PsbE, PsbF, PsbH, PsbI, PsbJ, PsbK, PsbL, PsbM, PsbT, PsbX, PsbY, PsbZ, Psb30/Ycf12, at least 3 peripheral proteins of the oxygen-evolving complex and a large number of cofactors. It forms dimeric complexes. It depends on Binds multiple chlorophylls and provides some of the ligands for the Ca-4Mn-5O cluster of the oxygen-evolving complex. It may also provide a ligand for a Cl- that is required for oxygen evolution. PSII binds additional chlorophylls, carotenoids and specific lipids. as a cofactor. Post-translationally, over time a tryptophan in the fifth lumenal loop is converted to 2-hydroxy-2,3-dihydrotryptophan, 2-oxo-2,3-dihydrotryptophan, and kynurenine by oxidizing species from the active site. This oxidation targets the protein for turnover.

It is found in the plastid. It localises to the chloroplast thylakoid membrane. One of the components of the core complex of photosystem II (PSII). It binds chlorophyll and helps catalyze the primary light-induced photochemical processes of PSII. PSII is a light-driven water:plastoquinone oxidoreductase, using light energy to abstract electrons from H(2)O, generating O(2) and a proton gradient subsequently used for ATP formation. The sequence is that of Photosystem II CP43 reaction center protein from Spinacia oleracea (Spinach).